Consider the following 436-residue polypeptide: UDP-glucuronate 4-epimerase 5 (436 aa).

2 helical membrane passes run 36–56 and 95–115; these read LTLW…LSPP and GLTV…SIAL. Position 97 to 128 (97 to 128) interacts with NAD(+); sequence TVLVTGASGFVGTHVSIALRRRGDGVLGLDNF. Tyr-247 serves as the catalytic Proton acceptor.

This sequence belongs to the NAD(P)-dependent epimerase/dehydratase family. Homodimer. In terms of tissue distribution, in leaves, pollen and siliques, but not in roots or flowers.

It localises to the golgi apparatus. Its subcellular location is the golgi stack membrane. It carries out the reaction UDP-alpha-D-glucuronate = UDP-alpha-D-galacturonate. In terms of biological role, involved in the synthesis of the negatively charged monosaccharide that forms the backbone of pectic cell wall components. This Arabidopsis thaliana (Mouse-ear cress) protein is UDP-glucuronate 4-epimerase 5 (GAE5).